The primary structure comprises 773 residues: DEAD-box ATP-dependent RNA helicase 32 (773 aa).

Residues 28–71 (IDAGKPARGTRPPPLSKSSSSPADTAAAKRGAKGAGGVPSKAAG) form a disordered region. Low complexity predominate over residues 43-56 (SKSSSSPADTAAAK). A Q motif motif is present at residues 80–108 (ARFDELPLSNKTKDGLRKAGYTEMSEIQR). The 177-residue stretch at 111-287 (LPHALCGRDV…RVSLKDPEYI (177 aa)) folds into the Helicase ATP-binding domain. 124 to 131 (AKTGSGKT) provides a ligand contact to ATP. The DEAD box signature appears at 235–238 (DEAD). One can recognise a Helicase C-terminal domain in the interval 309-462 (PLEQKLNMLW…IKKPNTEQLQ (154 aa)). Residues 664–715 (DKDKISQRYAEMLREMQEHDKEDKLEHKRILREKKLQKKLKLKRKRNEEMDA) adopt a coiled-coil conformation. Residues 699-708 (LQKKLKLKRK) are compositionally biased toward basic residues. Residues 699–755 (LQKKLKLKRKRNEEMDAGSENSGSESDRDQRTASKGKKRYFNSDDEEGSKDAAKDGD) are disordered.

It belongs to the DEAD box helicase family. DDX10/DBP4 subfamily.

It carries out the reaction ATP + H2O = ADP + phosphate + H(+). This Oryza sativa subsp. japonica (Rice) protein is DEAD-box ATP-dependent RNA helicase 32.